A 377-amino-acid polypeptide reads, in one-letter code: Presenilin-associated rhomboid-like protein, mitochondrial (377 aa).

The N-terminal 50 residues, methionine 1–glycine 50, are a transit peptide targeting the mitochondrion. Over phenylalanine 51–proline 99 the chain is Mitochondrial matrix. 2 positions are modified to phosphoserine: serine 63 and serine 68. Residues phenylalanine 100–tyrosine 119 traverse the membrane as a helical segment. Topologically, residues glutamate 120–arginine 165 are mitochondrial intermembrane. The chain crosses the membrane as a helical span at residues threonine 166–serine 185. The Mitochondrial matrix segment spans residues leucine 186–serine 205. Residues proline 206–tryptophan 228 traverse the membrane as a helical segment. The Mitochondrial intermembrane segment spans residues serine 229 to glutamine 242. Residues phenylalanine 243–valine 260 form a helical membrane-spanning segment. At cysteine 261 to proline 270 the chain is on the mitochondrial matrix side. A helical membrane pass occupies residues serine 271–threonine 287. The Nucleophile role is filled by serine 275. At lysine 288–arginine 293 the chain is on the mitochondrial intermembrane side. A helical membrane pass occupies residues leucine 294–methionine 316. Residues aspartate 317–histidine 330 lie on the Mitochondrial matrix side of the membrane. Residues alanine 331–tryptophan 352 form a helical membrane-spanning segment. Residue histidine 333 is part of the active site. At lysine 353 to lysine 377 the chain is on the mitochondrial intermembrane side.

Belongs to the peptidase S54 family. Interacts with PSEN1 and PSEN2. Binds OPA1. P-beta is proteolytically processed (beta-cleavage) in a PARL-dependent manner.

Its subcellular location is the mitochondrion inner membrane. The protein resides in the nucleus. It catalyses the reaction Cleaves type-1 transmembrane domains using a catalytic dyad composed of serine and histidine that are contributed by different transmembrane domains.. Its function is as follows. Required for the control of apoptosis during postnatal growth. Essential for proteolytic processing of an antiapoptotic form of OPA1 which prevents the release of mitochondrial cytochrome c in response to intrinsic apoptotic signals. Required for the maturation of PINK1 into its 52kDa mature form after its cleavage by mitochondrial-processing peptidase (MPP). Promotes cleavage of serine/threonine-protein phosphatase PGAM5 in damaged mitochondria in response to loss of mitochondrial membrane potential. Mediates differential cleavage of PINK1 and PGAM5 depending on the health status of mitochondria, disassociating from PINK1 and associating with PGAM5 in response to mitochondrial membrane potential loss. Required for processing of CLPB into a form with higher protein disaggregase activity by removing an autoinhibitory N-terminal peptide. Promotes processing of DIABLO/SMAC in the mitochondrion which is required for DIABLO apoptotic activity. Also required for cleavage of STARD7 and TTC19. Promotes changes in mitochondria morphology regulated by phosphorylation of P-beta domain. In Mus musculus (Mouse), this protein is Presenilin-associated rhomboid-like protein, mitochondrial (Parl).